Here is a 385-residue protein sequence, read N- to C-terminus: Glucans biosynthesis protein C (385 aa).

A run of 10 helical transmembrane segments spans residues 17–37, 60–80, 91–111, 137–157, 173–193, 212–232, 239–259, 274–294, 311–331, and 338–358; these read AWLM…SHTW, MQVF…RYPL, VGIP…IMLQ, ISHL…VWIF, KFSM…YAVI, FIVM…LAFI, LFTT…VAYL, TESV…FSFG, ASLF…AYIT, and WLGF…LYEI.

This sequence belongs to the acyltransferase 3 family. OpgC subfamily.

Its subcellular location is the cell membrane. It participates in glycan metabolism; osmoregulated periplasmic glucan (OPG) biosynthesis. Necessary for the succinyl substitution of periplasmic glucans. Could catalyze the transfer of succinyl residues from the cytoplasmic side of the membrane to the nascent glucan backbones on the periplasmic side of the membrane. The protein is Glucans biosynthesis protein C of Escherichia coli O6:K15:H31 (strain 536 / UPEC).